The primary structure comprises 228 residues: Protein GlxC (228 aa).

It belongs to the FwdC/FmdC family.

The chain is Protein GlxC (glxC) from Rhizobium meliloti (strain 1021) (Ensifer meliloti).